The primary structure comprises 397 residues: Elongation factor Tu (397 aa).

The tr-type G domain occupies K10–E207. The interval G19 to T26 is G1. G19–T26 lines the GTP pocket. T26 is a binding site for Mg(2+). The tract at residues G60–N64 is G2. The interval D81–G84 is G3. GTP contacts are provided by residues D81–H85 and N136–D139. The interval N136 to D139 is G4. The interval S174–L176 is G5.

This sequence belongs to the TRAFAC class translation factor GTPase superfamily. Classic translation factor GTPase family. EF-Tu/EF-1A subfamily. In terms of assembly, monomer.

The protein resides in the cytoplasm. It carries out the reaction GTP + H2O = GDP + phosphate + H(+). Functionally, GTP hydrolase that promotes the GTP-dependent binding of aminoacyl-tRNA to the A-site of ribosomes during protein biosynthesis. The sequence is that of Elongation factor Tu from Pseudomonas fluorescens (strain ATCC BAA-477 / NRRL B-23932 / Pf-5).